The sequence spans 459 residues: Glutamyl-tRNA reductase (459 aa).

Residues 49–52, Ser109, 114–116, and Gln120 contribute to the substrate site; these read TCNR and EQQ. Cys50 acts as the Nucleophile in catalysis. 189–194 lines the NADP(+) pocket; it reads GAGAMG.

This sequence belongs to the glutamyl-tRNA reductase family. As to quaternary structure, homodimer.

The catalysed reaction is (S)-4-amino-5-oxopentanoate + tRNA(Glu) + NADP(+) = L-glutamyl-tRNA(Glu) + NADPH + H(+). It participates in porphyrin-containing compound metabolism; protoporphyrin-IX biosynthesis; 5-aminolevulinate from L-glutamyl-tRNA(Glu): step 1/2. In terms of biological role, catalyzes the NADPH-dependent reduction of glutamyl-tRNA(Glu) to glutamate 1-semialdehyde (GSA). This Mycolicibacterium paratuberculosis (strain ATCC BAA-968 / K-10) (Mycobacterium paratuberculosis) protein is Glutamyl-tRNA reductase.